The sequence spans 355 residues: Uroporphyrinogen decarboxylase (355 aa).

Substrate-binding positions include 27–31 (RQAGR), Asp77, Tyr154, Thr209, and His327.

The protein belongs to the uroporphyrinogen decarboxylase family. In terms of assembly, homodimer.

It localises to the cytoplasm. The catalysed reaction is uroporphyrinogen III + 4 H(+) = coproporphyrinogen III + 4 CO2. It functions in the pathway porphyrin-containing compound metabolism; protoporphyrin-IX biosynthesis; coproporphyrinogen-III from 5-aminolevulinate: step 4/4. Catalyzes the decarboxylation of four acetate groups of uroporphyrinogen-III to yield coproporphyrinogen-III. The chain is Uroporphyrinogen decarboxylase from Pseudoalteromonas atlantica (strain T6c / ATCC BAA-1087).